The primary structure comprises 388 residues: Trans-enoyl reductase tenC (388 aa).

V51 to K54 is a binding site for NADP(+). V142 to M149 contacts substrate. NADP(+) contacts are provided by residues S219–S222, Y237, and L284–D285. S304 to F308 lines the substrate pocket. An NADP(+)-binding site is contributed by I373–K374.

It belongs to the zinc-containing alcohol dehydrogenase family. As to quaternary structure, monomer.

Its pathway is secondary metabolite biosynthesis. Functionally, trans-enoyl reductase; part of the gene cluster that mediates the biosynthesis of tenellin-type 2-pyridones, iron-chelating compounds involved in iron stress tolerance, competition with the natural competitor fungus Metarhizium robertsii and insect hosts infection. TenC collaborates with the hybrid PKS-NRPS synthetase tenS to catalyze the assembly of the polyketide-amino acid backbone, since tenS lacks a designated enoylreductase (ER) domain. Upon formation of the polyketide backbone on the thiotemplate of tenS, the triketide is transferred to the NRPS module and linked to tyrosine to produce the pyrrolidine-2-dione intermediates, including pretellinin A, 11-hydropretellenin A, 12-hydropretellenin A, 13-hydropretellenin A, 14-hydropretellenin A, 12-oxopretellenin A and prototellinin D. The pathway begins with the assembly of the polyketide-amino acid backbone by the hybrid PKS-NRPS tenS with the help of the enoyl reductase tenC. These enzymes catalyze the synthesis of the pyrrolidine-2-dione intermediates pretellinin A, 11-hydropretellenin A, 12-hydropretellenin A, 13-hydropretellenin A, 14-hydropretellenin A, 12-oxopretellenin A and prototellinin D. The cytochrome P450 monooxygenase tenA then catalyzes an oxidative ring expansion of pretenellin A and 14-hydropretellenin A to form the 2-pyridone core, leading to pretenellin B and pyridovericin, respectively. The cytochrome P450 monooxygenase tenB is then required for the selective N-hydroxylation of the 2-pyridone nitrogen of yield tellinin and 15-hydroxytellenin (15-HT), respectively. The UDP-glucosyltransferase GT1 and the methyltransferase MT1, located outside the tenS gene cluster, contribute to the stepwise glycosylation and methylation of 15-HT to obtain the glycoside pyridovericin-N-O-(4-O-methyl-beta-D-glucopyranoside) (PMGP). Additional related compounds such as 1-O-methyl-15-HT, (8Z)-1-O-methyl-15-HT, and O-methyltenellin A are also produced but the enzymes involved in their biosynthesis have still to be determined. In Beauveria bassiana (White muscardine disease fungus), this protein is Trans-enoyl reductase tenC.